The chain runs to 512 residues: MSETDRERPLLASEERAYEETEKVLIVGIDEEEDADYDDDPGNSPKFSWKKLWLFTGPGFLMSIAFLDPGNLESDLQAGAIAGYSLIWLLMWATAIGLLIQLLSARLGVATGRHLAELCREEYPTWARMVLWIMAEIALIGADIQEVIGSAIAIKILSNGLVPLWAGVVITALDCFIFLFLENYGIRKLEAVFAILIATMALAFAWMFGQTKPSGTELLVGALVPKLSSRTIKQAVGIVGCIIMPHNVFLHSALVQSREVDPKKRFRVKEALKYYSIESTGALAVSFIINVFVTTVFAKSFYGTEIADTIGLANAGQYLQDKYGGGFFPILYIWAIGVLAAGQSSTITGTYAGQFIMGGFLNLKMKKWVRALITRSCAIIPTMIVALVFDSSDSMLDELNEWLNVLQSVQIPFAVIPLLCLVSNEQIMGSFKIQPLVQTISWIVAALVIAINGYLMVDFFSGAATNLILLVPVIIFAIAYVVFVLYLISRGLTYTPWQLVASSHKEPQRDDE.

Transmembrane regions (helical) follow at residues 52–72, 80–100, 129–149, 161–181, 189–209, 235–255, 277–297, 323–343, 371–391, 402–422, 440–460, and 468–488; these read LWLFTGPGFLMSIAFLDPGNL, AIAGYSLIWLLMWATAIGLLI, MVLWIMAEIALIGADIQEVIG, LVPLWAGVVITALDCFIFLFL, LEAVFAILIATMALAFAWMFG, AVGIVGCIIMPHNVFLHSALV, IESTGALAVSFIINVFVTTVF, YGGGFFPILYIWAIGVLAAGQ, ALITRSCAIIPTMIVALVFDS, WLNVLQSVQIPFAVIPLLCLV, ISWIVAALVIAINGYLMVDFF, and ILLVPVIIFAIAYVVFVLYLI.

Belongs to the NRAMP (TC 2.A.55) family. In terms of tissue distribution, expressed in vascular tissues.

It localises to the vacuole membrane. In terms of biological role, vacuolar metal transporter involved in intracellular metal homeostasis. Can transport iron (Fe), manganese (Mn) and cadmium (Cd). Regulates metal accumulation under Fe starvation. Acts redundantly with NRAMP3 to mobilize vacuolar Fe and provide sufficient Fe during seed germination. In association with NRAMP3, required for optimal growth and photosynthesis under Mn deficiency. Exports Mn from vacuoles in leaf mesophyll cells, making Mn available for functional photosystem II in chloroplasts. The chain is Metal transporter Nramp4 (NRAMP4) from Arabidopsis thaliana (Mouse-ear cress).